Here is a 311-residue protein sequence, read N- to C-terminus: MNKNKPFIVVIVGPTASGKTELSIELAKRINGEIISGDSMQVYKHMNIGTAKVTPEEMDGIPHHLIDILNPDDTFSAYEFKRLAEDLITDITNRGKVPIIAGGTGLYIQSLIYNYELEDETVTPAQLSIVKQKLSALEHLDNQQLHDYLAQFDAVSAENIHPNNRQRVLRAIEYYLKTKKLLSNRKKVQQFTENYDTLLLGIEMSRKTLYSRINKRVDIMLDHGLFREVQQLVEQGYESCQSMQAIGYKELIPVINGQMIYEDAVNDLKQHSRQYAKRQMTWFKNKMSVHWLDKENMSLQMMLDEITTQIK.

Position 13-20 (13-20 (GPTASGKT)) interacts with ATP. Residue 15 to 20 (TASGKT) coordinates substrate. Interaction with substrate tRNA regions lie at residues 38–41 (DSMQ) and 166–170 (QRVLR).

The protein belongs to the IPP transferase family. As to quaternary structure, monomer. Mg(2+) is required as a cofactor.

It catalyses the reaction adenosine(37) in tRNA + dimethylallyl diphosphate = N(6)-dimethylallyladenosine(37) in tRNA + diphosphate. Functionally, catalyzes the transfer of a dimethylallyl group onto the adenine at position 37 in tRNAs that read codons beginning with uridine, leading to the formation of N6-(dimethylallyl)adenosine (i(6)A). In Staphylococcus aureus (strain Mu3 / ATCC 700698), this protein is tRNA dimethylallyltransferase.